The following is a 976-amino-acid chain: Villin-2 (976 aa).

6 Gelsolin-like repeats span residues 27 to 77 (FEAV…DEAG), 148 to 188 (IRLK…QERA), 260 to 302 (GKME…DERK), 399 to 450 (GKVK…EDQD), 531 to 571 (NKAV…EQLE), and 633 to 674 (FQVE…KEKQ). Residues 769 to 917 (NSSSNRPAYS…SEIQPSGATF (149 aa)) form a disordered region. Residues 782–794 (RLNESHDGPRQRA) show a composition bias toward basic and acidic residues. Low complexity-rich tracts occupy residues 795-812 (EALA…SSTK), 823-841 (SQAS…VLVA), and 848-858 (DTSPTRRSTSS). Ser-890 is subject to Phosphoserine. The span at 908–917 (SEIQPSGATF) shows a compositional bias: polar residues. The HP domain occupies 911–976 (QPSGATFTYE…DLLKKKFDLF (66 aa)).

Belongs to the villin/gelsolin family. As to expression, expressed in all tissues examined. Mainly detected in the root epidermis and vasculature. Expressed in the root cap.

The protein resides in the cytoplasm. It is found in the cytoskeleton. In terms of biological role, ca(2+)-regulated actin-binding protein. Involved in actin filaments bundling. Caps the barbed end of actin filaments and is able to sever them in a calcium-dependent manner. Required for the construction of actin collars in pollen tubes. Acts redundantly with VLN5 (AC Q9LVC6) to generate thick actin filament bundles and to regulate polarized pollen tube growth. Acts redundantly with VLN3 (AC O81645) to regulate directional organ growth and in sclerenchyma development. The sequence is that of Villin-2 from Arabidopsis thaliana (Mouse-ear cress).